The sequence spans 310 residues: Alpha/beta hydrolase domain-containing protein 17C (310 aa).

Residues Ser-192, Asp-257, and His-286 each act as charge relay system in the active site.

It belongs to the AB hydrolase superfamily. ABHD17 family. In terms of processing, palmitoylated on cysteine residues located in a cysteine cluster at the N-terminus which promotes membrane localization.

It localises to the recycling endosome membrane. The protein resides in the cell projection. The protein localises to the dendritic spine. Its subcellular location is the postsynaptic density membrane. The enzyme catalyses S-hexadecanoyl-L-cysteinyl-[protein] + H2O = L-cysteinyl-[protein] + hexadecanoate + H(+). Hydrolyzes fatty acids from S-acylated cysteine residues in proteins. The polypeptide is Alpha/beta hydrolase domain-containing protein 17C (Xenopus tropicalis (Western clawed frog)).